A 327-amino-acid chain; its full sequence is Ribosomal RNA small subunit methyltransferase H (327 aa).

Residues 36-38, Asp55, Leu89, Asp103, and Gln110 each bind S-adenosyl-L-methionine; that span reads GGH. The tract at residues 286 to 327 is disordered; the sequence is GAEPASDTEIEQNARAGSVRLRAAERTAAEPGRAHNPTGGVR.

Belongs to the methyltransferase superfamily. RsmH family.

It localises to the cytoplasm. It carries out the reaction cytidine(1402) in 16S rRNA + S-adenosyl-L-methionine = N(4)-methylcytidine(1402) in 16S rRNA + S-adenosyl-L-homocysteine + H(+). Functionally, specifically methylates the N4 position of cytidine in position 1402 (C1402) of 16S rRNA. In Parafrankia sp. (strain EAN1pec), this protein is Ribosomal RNA small subunit methyltransferase H.